Consider the following 929-residue polypeptide: ATP-dependent DNA helicase PIF1 (929 aa).

The N-terminal 52 residues, 1 to 52 (MLRRLLQPAYNVALSGTSASTLPRKSASVGLVRTALMPVDYNAGALFCAMRF), are a transit peptide targeting the mitochondrion. Residues 55-89 (GTEKERKREPKRGSKRRSKATTTLSTPTDAQTSVT) are disordered. Over residues 56–66 (TEKERKREPKR) the composition is skewed to basic and acidic residues. The segment covering 74 to 89 (ATTTLSTPTDAQTSVT) has biased composition (polar residues). 302 to 309 (GSAGTGKT) contributes to the ATP binding site. A DNA-binding region spans residues 776–796 (HLLYVAMSRVRNPEQLSMSSF). The tract at residues 902–929 (HERRQKKMAVEGAKQTDTTKASSGESLE) is disordered. Positions 916–929 (QTDTTKASSGESLE) are enriched in polar residues.

It belongs to the helicase family. PIF1 subfamily. As to quaternary structure, monomer. It depends on Mg(2+) as a cofactor.

Its subcellular location is the mitochondrion. The enzyme catalyses Couples ATP hydrolysis with the unwinding of duplex DNA at the replication fork by translocating in the 5'-3' direction. This creates two antiparallel DNA single strands (ssDNA). The leading ssDNA polymer is the template for DNA polymerase III holoenzyme which synthesizes a continuous strand.. It catalyses the reaction ATP + H2O = ADP + phosphate + H(+). In terms of biological role, DNA-dependent ATPase and probable 5'-3' DNA helicase required for the maintenance of mitochondrial (kinetoplast) genome stability. Essential for replication of kinetoplast minicircles. Involved in the segregation of minicircle progeny. This Trypanosoma brucei brucei (strain 927/4 GUTat10.1) protein is ATP-dependent DNA helicase PIF1.